A 436-amino-acid chain; its full sequence is MNNIIPIMSLLFKQLYSRQGKKDAIRIAAGLVILAVFEIGLIRQAGIDESVLRKTYIILALLLMNTYMVFLSVTSQWKESYMKLSCLLPISSRSFWLAQSVVLFVDTCLRRTLFFFILPLFLFGNGTLSGAQTLFWLGRFSFFTVYSIIFGVVLSNHFVKKKNLMFLLHAAIFACVCISAALMPAATIPLCAVHILWAVVIDFPVFLQAPPQQGKMHSFMRRSEFSFYKREWNRFISSKAMLLNYAVMAVFSGFFSFQMMNTGIFNQQVIYIVISALLLICSPIALLYSIEKNDRMLLITLPIKRKTMFWAKYRFYSGLLAGGFLLVVMIVGFISGRSISVLTFLQCIELLLAGAYIRLTADEKRPSFSWQTEQQLWSGFSKYRSYLFCLPLFLAILAGTAVSLAVIPIAGLVIVYYLQKQDGGFFDTSKRERLGS.

Transmembrane regions (helical) follow at residues 27–47 (IAAG…QAGI), 55–75 (TYII…SVTS), 113–133 (LFFF…GAQT), 134–154 (LFWL…GVVL), 164–184 (LMFL…ALMP), 187–207 (TIPL…PVFL), 240–260 (AMLL…FQMM), 270–290 (IYIV…LYSI), 315–335 (FYSG…GFIS), and 395–415 (AILA…LVIV).

Its subcellular location is the cell membrane. Its function is as follows. Involved in the production of the bacteriocin subtilosin. Required for immunity to subtilosin. This chain is Antilisterial bacteriocin subtilosin biosynthesis protein AlbD (albD), found in Bacillus subtilis (strain 168).